We begin with the raw amino-acid sequence, 279 residues long: HTH-type transcriptional activator RhaS (279 aa).

In terms of domain architecture, HTH araC/xylS-type spans 175–273; the sequence is QALLGWLQNN…SQAPKSLRHQ (99 aa). 2 DNA-binding regions (H-T-H motif) span residues 192–213 and 240–263; these read GGLA…KQHT and ITTI…RKAF.

Binds DNA as a dimer.

The protein resides in the cytoplasm. Functionally, activates expression of the rhaBAD and rhaT operons. This is HTH-type transcriptional activator RhaS from Pectobacterium atrosepticum (strain SCRI 1043 / ATCC BAA-672) (Erwinia carotovora subsp. atroseptica).